We begin with the raw amino-acid sequence, 449 residues long: UDP-N-acetylmuramoylalanine--D-glutamate ligase (449 aa).

Residue 118–124 coordinates ATP; that stretch reads GTNGKTT.

It belongs to the MurCDEF family.

Its subcellular location is the cytoplasm. It carries out the reaction UDP-N-acetyl-alpha-D-muramoyl-L-alanine + D-glutamate + ATP = UDP-N-acetyl-alpha-D-muramoyl-L-alanyl-D-glutamate + ADP + phosphate + H(+). The protein operates within cell wall biogenesis; peptidoglycan biosynthesis. Its function is as follows. Cell wall formation. Catalyzes the addition of glutamate to the nucleotide precursor UDP-N-acetylmuramoyl-L-alanine (UMA). The sequence is that of UDP-N-acetylmuramoylalanine--D-glutamate ligase from Staphylococcus carnosus (strain TM300).